Here is a 241-residue protein sequence, read N- to C-terminus: Interleukin-6 (241 aa).

A signal peptide spans 1–26; it reads MNSFTSALRPGPLGCSLALLLVVATA. Positions 32 to 51 are disordered; sequence PVREDSNTKASPDKTLTPPG. 2 cysteine pairs are disulfide-bonded: C72-C78 and C101-C111. N-linked (GlcNAc...) asparagine glycosylation is present at N108.

The protein belongs to the IL-6 superfamily. Component of a hexamer of two molecules each of IL6, IL6R and IL6ST; first binds to IL6R to associate with the signaling subunit IL6ST. Interacts with IL6R (via the N-terminal ectodomain); this interaction may be affected by IL6R-binding with SORL1, hence decreasing IL6 cis signaling. Interacts with SORL1 (via the N-terminal ectodomain); this interaction leads to IL6 internalization and lysosomal degradation. May form a trimeric complex with the soluble SORL1 ectodomain and soluble IL6R receptor; this interaction might stabilize circulating IL6, hence promoting IL6 trans signaling.

It localises to the secreted. Its function is as follows. Cytokine with a wide variety of biological functions in immunity, tissue regeneration, and metabolism. Binds to IL6R, then the complex associates to the signaling subunit IL6ST/gp130 to trigger the intracellular IL6-signaling pathway. The interaction with the membrane-bound IL6R and IL6ST stimulates 'classic signaling', whereas the binding of IL6 and soluble IL6R to IL6ST stimulates 'trans-signaling'. Alternatively, 'cluster signaling' occurs when membrane-bound IL6:IL6R complexes on transmitter cells activate IL6ST receptors on neighboring receiver cells. IL6 is a potent inducer of the acute phase response. Rapid production of IL6 contributes to host defense during infection and tissue injury, but excessive IL6 synthesis is involved in disease pathology. In the innate immune response, is synthesized by myeloid cells, such as macrophages and dendritic cells, upon recognition of pathogens through toll-like receptors (TLRs) at the site of infection or tissue injury. In the adaptive immune response, is required for the differentiation of B cells into immunoglobulin-secreting cells. Plays a major role in the differentiation of CD4(+) T cell subsets. Essential factor for the development of T follicular helper (Tfh) cells that are required for the induction of germinal-center formation. Required to drive naive CD4(+) T cells to the Th17 lineage. Also required for proliferation of myeloma cells and the survival of plasmablast cells. In terms of biological role, acts as an essential factor in bone homeostasis and on vessels directly or indirectly by induction of VEGF, resulting in increased angiogenesis activity and vascular permeability. Induces, through 'trans-signaling' and synergistically with IL1B and TNF, the production of VEGF. Involved in metabolic controls, is discharged into the bloodstream after muscle contraction increasing lipolysis and improving insulin resistance. 'Trans-signaling' in central nervous system also regulates energy and glucose homeostasis. Mediates, through GLP-1, crosstalk between insulin-sensitive tissues, intestinal L cells and pancreatic islets to adapt to changes in insulin demand. Also acts as a myokine. Plays a protective role during liver injury, being required for maintenance of tissue regeneration. Also has a pivotal role in iron metabolism by regulating HAMP/hepcidin expression upon inflammation or bacterial infection. Through activation of IL6ST-YAP-NOTCH pathway, induces inflammation-induced epithelial regeneration. The sequence is that of Interleukin-6 (IL6) from Oryctolagus cuniculus (Rabbit).